Reading from the N-terminus, the 744-residue chain is 3-isopropylmalate dehydratase (744 aa).

Residues cysteine 341, cysteine 401, and cysteine 404 each coordinate [4Fe-4S] cluster.

This sequence belongs to the aconitase/IPM isomerase family. Monomer. [4Fe-4S] cluster serves as cofactor.

It catalyses the reaction (2R,3S)-3-isopropylmalate = (2S)-2-isopropylmalate. It participates in amino-acid biosynthesis; L-leucine biosynthesis; L-leucine from 3-methyl-2-oxobutanoate: step 2/4. Functionally, catalyzes the isomerization between 2-isopropylmalate and 3-isopropylmalate, via the formation of 2-isopropylmaleate. This Phycomyces blakesleeanus (strain ATCC 8743b / DSM 1359 / FGSC 10004 / NBRC 33097 / NRRL 1555) protein is 3-isopropylmalate dehydratase (leu1).